Reading from the N-terminus, the 931-residue chain is Protein translocase subunit SecA (931 aa).

Residues glutamine 87, 105–109 (GEGKT), and aspartate 515 each bind ATP. Residues cysteine 915, cysteine 917, cysteine 926, and histidine 927 each contribute to the Zn(2+) site.

Belongs to the SecA family. In terms of assembly, monomer and homodimer. Part of the essential Sec protein translocation apparatus which comprises SecA, SecYEG and auxiliary proteins SecDF-YajC and YidC. It depends on Zn(2+) as a cofactor.

It is found in the cell inner membrane. The protein resides in the cytoplasm. The catalysed reaction is ATP + H2O + cellular proteinSide 1 = ADP + phosphate + cellular proteinSide 2.. Functionally, part of the Sec protein translocase complex. Interacts with the SecYEG preprotein conducting channel. Has a central role in coupling the hydrolysis of ATP to the transfer of proteins into and across the cell membrane, serving both as a receptor for the preprotein-SecB complex and as an ATP-driven molecular motor driving the stepwise translocation of polypeptide chains across the membrane. This Burkholderia pseudomallei (strain 1106a) protein is Protein translocase subunit SecA.